The primary structure comprises 372 residues: Alanine dehydrogenase 2 (372 aa).

Residue H95 is part of the active site. 169–199 (KVTIIGGGQAGTNAAKIALGLGADVTILDVN) serves as a coordination point for NAD(+).

Belongs to the AlaDH/PNT family.

It catalyses the reaction L-alanine + NAD(+) + H2O = pyruvate + NH4(+) + NADH + H(+). The protein operates within amino-acid degradation; L-alanine degradation via dehydrogenase pathway; NH(3) and pyruvate from L-alanine: step 1/1. Functionally, may play a role in cell wall synthesis as L-alanine is an important constituent of the peptidoglycan layer. In Staphylococcus aureus (strain Mu50 / ATCC 700699), this protein is Alanine dehydrogenase 2 (ald2).